Reading from the N-terminus, the 471-residue chain is Glutamate--tRNA ligase (471 aa).

The 'HIGH' region motif lies at 9–19 (PSPTGYLHVGG). Zn(2+) contacts are provided by cysteine 98, cysteine 100, cysteine 125, and histidine 127. Positions 237-241 (KLSKR) match the 'KMSKS' region motif. ATP is bound at residue lysine 240.

This sequence belongs to the class-I aminoacyl-tRNA synthetase family. Glutamate--tRNA ligase type 1 subfamily. As to quaternary structure, monomer. Requires Zn(2+) as cofactor.

It localises to the cytoplasm. The catalysed reaction is tRNA(Glu) + L-glutamate + ATP = L-glutamyl-tRNA(Glu) + AMP + diphosphate. In terms of biological role, catalyzes the attachment of glutamate to tRNA(Glu) in a two-step reaction: glutamate is first activated by ATP to form Glu-AMP and then transferred to the acceptor end of tRNA(Glu). This chain is Glutamate--tRNA ligase, found in Salmonella gallinarum (strain 287/91 / NCTC 13346).